A 187-amino-acid chain; its full sequence is UPF0340 protein SPP_0683 (187 aa).

The protein belongs to the UPF0340 family.

The protein is UPF0340 protein SPP_0683 of Streptococcus pneumoniae (strain P1031).